We begin with the raw amino-acid sequence, 100 residues long: Large ribosomal subunit protein uL23 (100 aa).

Belongs to the universal ribosomal protein uL23 family. In terms of assembly, part of the 50S ribosomal subunit. Contacts protein L29, and trigger factor when it is bound to the ribosome.

Its function is as follows. One of the early assembly proteins it binds 23S rRNA. One of the proteins that surrounds the polypeptide exit tunnel on the outside of the ribosome. Forms the main docking site for trigger factor binding to the ribosome. The protein is Large ribosomal subunit protein uL23 of Lacticaseibacillus casei (strain BL23) (Lactobacillus casei).